The chain runs to 590 residues: Phenylalanine--tRNA ligase beta subunit (590 aa).

Residues 276 to 382 (MELDVWDVPV…IMYNYDRFEP (107 aa)) enclose the B5 domain. Residues asparagine 360, aspartate 366, glutamate 369, and aspartate 370 each coordinate Mg(2+).

It belongs to the phenylalanyl-tRNA synthetase beta subunit family. Type 2 subfamily. Tetramer of two alpha and two beta subunits. Mg(2+) serves as cofactor.

The protein resides in the cytoplasm. It catalyses the reaction tRNA(Phe) + L-phenylalanine + ATP = L-phenylalanyl-tRNA(Phe) + AMP + diphosphate + H(+). This chain is Phenylalanine--tRNA ligase beta subunit, found in Methanopyrus kandleri (strain AV19 / DSM 6324 / JCM 9639 / NBRC 100938).